Consider the following 234-residue polypeptide: 2,3-bisphosphoglycerate-dependent phosphoglycerate mutase (234 aa).

Substrate-binding positions include 10-17 (RHGSSIWN), 23-24 (TG), R62, 89-92 (ERHY), K100, 116-117 (RR), and 186-187 (GN). The active-site Tele-phosphohistidine intermediate is H11. E89 acts as the Proton donor/acceptor in catalysis.

This sequence belongs to the phosphoglycerate mutase family. BPG-dependent PGAM subfamily. In terms of assembly, homodimer.

The enzyme catalyses (2R)-2-phosphoglycerate = (2R)-3-phosphoglycerate. The protein operates within carbohydrate degradation; glycolysis; pyruvate from D-glyceraldehyde 3-phosphate: step 3/5. Catalyzes the interconversion of 2-phosphoglycerate and 3-phosphoglycerate. The chain is 2,3-bisphosphoglycerate-dependent phosphoglycerate mutase from Wigglesworthia glossinidia brevipalpis.